Consider the following 634-residue polypeptide: RING finger protein 207 (634 aa).

An RING-type zinc finger spans residues 25-64 (CPLCHVQYERPCLLDCFHDFCAGCLRGRATDGRLTCPLCQ). The segment at 93–145 (VEAVRCANCDLECSEQDVETTYFCNTCGQPLCARCRDETHRARMFARHDIVAL) adopts a B box-type; atypical zinc-finger fold. Cys98, Cys101, Cys127, and His132 together coordinate Zn(2+). Coiled coils occupy residues 422 to 457 (EHCRHYEDSYRHLQAEMQSLKDQVQELHRDLTKHHS) and 494 to 518 (EIWEEAYQRVANEQEIYEAQLHDLL). A disordered region spans residues 552 to 634 (FQAPVDEQSE…DVPTWREHPT (83 aa)).

In terms of assembly, interacts with the core-glycosylated, but not the fully glycosylated form of KCNH2/HERG. Interacts with DNAJA1 and HSPA8. Interacts (via the C-terminus) with HSPA1A; this interaction additively increases KCNH2 expression.

The protein localises to the cytoplasm. Its function is as follows. Plays a role in cardiac repolarization possibly by stabilizing membrane expression of the potassium channel KCNH2/HERG, or by assisting its synthesis, folding or export from the endoplasmic reticulum, in a heat shock protein-dependent manner. This Homo sapiens (Human) protein is RING finger protein 207 (RNF207).